Here is a 322-residue protein sequence, read N- to C-terminus: Homoserine kinase (322 aa).

106-116 (ALSSGMGGSAA) provides a ligand contact to ATP.

Belongs to the GHMP kinase family. Homoserine kinase subfamily.

The protein resides in the cytoplasm. The catalysed reaction is L-homoserine + ATP = O-phospho-L-homoserine + ADP + H(+). It functions in the pathway amino-acid biosynthesis; L-threonine biosynthesis; L-threonine from L-aspartate: step 4/5. Functionally, catalyzes the ATP-dependent phosphorylation of L-homoserine to L-homoserine phosphate. This Xanthomonas campestris pv. campestris (strain B100) protein is Homoserine kinase.